Reading from the N-terminus, the 557-residue chain is Alpha-glucosidase (557 aa).

Asp-201 (nucleophile) is an active-site residue. Residue Glu-256 is the Proton donor of the active site.

The protein belongs to the glycosyl hydrolase 13 family.

It carries out the reaction Hydrolysis of terminal, non-reducing (1-&gt;4)-linked alpha-D-glucose residues with release of alpha-D-glucose.. The sequence is that of Alpha-glucosidase (agl) from Pediococcus pentosaceus.